The following is a 94-amino-acid chain: MSSRLAVFAYDIRDDRVRRHALKTLREWRLDGQLSVHECQVDAIQARRLFEQLGDELDPATDAWLFTWVEGHRAVLARGKGRTTALQDGLLLAA.

A Mg(2+)-binding site is contributed by aspartate 11.

It belongs to the CRISPR-associated endoribonuclease Cas2 protein family. In terms of assembly, homodimer, forms a heterotetramer with a Cas1 homodimer. Mg(2+) is required as a cofactor.

CRISPR (clustered regularly interspaced short palindromic repeat), is an adaptive immune system that provides protection against mobile genetic elements (viruses, transposable elements and conjugative plasmids). CRISPR clusters contain sequences complementary to antecedent mobile elements and target invading nucleic acids. CRISPR clusters are transcribed and processed into CRISPR RNA (crRNA). Functions as a ssRNA-specific endoribonuclease. Involved in the integration of spacer DNA into the CRISPR cassette. In Allochromatium vinosum (strain ATCC 17899 / DSM 180 / NBRC 103801 / NCIMB 10441 / D) (Chromatium vinosum), this protein is CRISPR-associated endoribonuclease Cas2.